The primary structure comprises 706 residues: B-cell lymphoma 6 protein (706 aa).

The 68-residue stretch at 32–99 folds into the BTB domain; the sequence is TDVVIVVSRE…MYTSRLNLRE (68 aa). Residues 317–349 are disordered; it reads EPPNAPLNRKGLVSPQSPQKSDCQPNSPTESCS. Over residues 330 to 349 the composition is skewed to polar residues; sequence SPQSPQKSDCQPNSPTESCS. Phosphoserine; by MAPK1 occurs at positions 333 and 343. The residue at position 361 (Ser-361) is a Phosphoserine. The interval 376 to 379 is required for interaction with NuRD complex and for transcriptional repressor activity; the sequence is KKYK. Lys-379 carries the post-translational modification N6-acetyllysine. Ser-404 carries the phosphoserine modification. The segment at 407-467 is disordered; the sequence is AYTAPPACQP…PRSSSESHSP (61 aa). Polar residues predominate over residues 424 to 456; that stretch reads DLQSPTKLSASGEDSTIPQASRLNNIVNRSMTG. Positions 457–466 are enriched in low complexity; the sequence is SPRSSSESHS. C2H2-type zinc fingers lie at residues 518-541, 546-568, 574-596, 602-624, 630-652, and 658-681; these read FFCN…LQTH, YKCD…KTVH, YRCN…TRIH, YKCE…VLIH, YPCE…LRIH, and YHCE…RQKH.

In terms of assembly, homodimer. Interacts (via BTB domain) with the corepressors BCOR, NCOR1 and SMRT/NCOR2; the interactions are direct. Forms preferably ternary complexes with BCOR and SMRT/NCOR2 on target gene promoters but, on enhancer elements, interacts with SMRT/NCOR2 and HDAC3 to repress proximal gene expression. Interacts with histone deacetylases HDAC2, HDAC5 and HDAC9 (via the catalytic domain). Interacts with ZBTB7 and BCL6B. Interacts with SCF(FBXO11) complex; the interaction is independent of phosphorylation and promotes ubiquitination. Interacts (when phosphorylated) with PIN1; the interaction is required for BCL6 degradation upon genotoxic stress. Interacts with ZBTB17; inhibits ZBTB17 transcriptional activity. Interacts with CTBP1, autoinhibits its transcriptional expression. Interacts with NOTCH1 NCID and SIRT1; leads to a epigenetic repression of selective NOTCH1-target genes. Interacts (nor via BTB domain neither acetylated) with the NuRD complex components CHD4, HDAC1, MBD3 and MTA3; the interaction with MTA3 inhibits BCL6 acetylation and is required for BCL6 transpriptional repression. In terms of processing, phosphorylated by MAPK1 in response to antigen receptor activation at Ser-333 and Ser-343. Phosphorylated by ATM in response to genotoxic stress. Phosphorylation induces its degradation by ubiquitin/proteasome pathway. Polyubiquitinated. Polyubiquitinated by SCF(FBXO11), leading to its degradation by the proteasome. Ubiquitinated by the SCF(FBXL17) complex, leading to its degradation by the proteasome: ubiquitination by the SCF(FBXL17) complex takes place when aberrant BTB domain dimers are formed. Post-translationally, acetylated at Lys-379 by EP300 which inhibits the interaction with NuRD complex and the transcriptional repressor function. Deacetylated by HDAC- and SIR2-dependent pathways. As to expression, expressed in germinal center T- and B-cells and in primary immature dendritic cells.

The protein resides in the nucleus. Its function is as follows. Transcriptional repressor mainly required for germinal center (GC) formation and antibody affinity maturation which has different mechanisms of action specific to the lineage and biological functions. Forms complexes with different corepressors and histone deacetylases to repress the transcriptional expression of different subsets of target genes. Represses its target genes by binding directly to the DNA sequence 5'-TTCCTAGAA-3' (BCL6-binding site) or indirectly by repressing the transcriptional activity of transcription factors. In GC B-cells, represses genes that function in differentiation, inflammation, apoptosis and cell cycle control, also autoregulates its transcriptional expression and up-regulates, indirectly, the expression of some genes important for GC reactions, such as AICDA, through the repression of microRNAs expression, like miR155. An important function is to allow GC B-cells to proliferate very rapidly in response to T-cell dependent antigens and tolerate the physiological DNA breaks required for immunglobulin class switch recombination and somatic hypermutation without inducing a p53/TP53-dependent apoptotic response. In follicular helper CD4(+) T-cells (T(FH) cells), promotes the expression of T(FH)-related genes but inhibits the differentiation of T(H)1, T(H)2 and T(H)17 cells. Also required for the establishment and maintenance of immunological memory for both T- and B-cells. Suppresses macrophage proliferation through competition with STAT5 for STAT-binding motifs binding on certain target genes, such as CCL2 and CCND2. In response to genotoxic stress, controls cell cycle arrest in GC B-cells in both p53/TP53-dependedent and -independent manners. Besides, also controls neurogenesis through the alteration of the composition of NOTCH-dependent transcriptional complexes at selective NOTCH targets, such as HES5, including the recruitment of the deacetylase SIRT1 and resulting in an epigenetic silencing leading to neuronal differentiation. This chain is B-cell lymphoma 6 protein (BCL6), found in Homo sapiens (Human).